The following is a 131-amino-acid chain: Protein TIFY 5A (131 aa).

The EAR signature appears at 9–13 (LELRL). Disordered stretches follow at residues 14–44 (FPTS…EESQ) and 74–131 (REMK…HSRR). Positions 16-34 (TSYDSDSSDTTSVVESTSS) are enriched in low complexity. A Tify domain is found at 39 to 74 (PNEESQRITIFYNGKMCFSSDVTHLQARSIISIASR). A compositionally biased stretch (polar residues) spans 79–100 (KSSSNGSDPPNKSTSFHHNQLP). Positions 105-127 (SMKKSLQSFLQKRKIRIQATSPY) match the Jas motif. The Nuclear localization signal motif lies at 106–113 (MKKSLQSF). Positions 122–131 (QATSPYHSRR) are enriched in polar residues.

The protein belongs to the TIFY/JAZ family. As to quaternary structure, interacts with TPL and weakly with COI1, but not with AFPH2/NINJA. Interacts with MYC2, MYB21, MYB24, TIFY10A/JAZ1, TIFY10B/JAZ2, TIFY6B/JAZ3, TIFY6A/JAZ4, TIFY11A/JAZ5, TIFY11B/JAZ6, TIFY7/JAZ9, TIFY9/JAZ10 and TIFY3B/JAZ12. Interacts with RHD6 and RSL1. In terms of assembly, (Microbial infection) Interacts with the pathogenic Pseudomonas syringae HopZ1a protein. Post-translationally, (Microbial infection) Acetylated by Pseudomonas syringae HopZ1a. In terms of processing, ubiquitinated.

The protein resides in the nucleus. Its function is as follows. Repressor of jasmonate responses. Unable to associate strongly with COI1 in the presence of jasmonoyl-isoleucine (JA-Ile) and is therefore more resistant to JA-mediated-degradation than other TIFY/JAZ proteins. Repress gene expression through direct recruitment of the corepressor TOPLESS to cognate transcription factors. Interacts with and suppresses RHD6 and RSL1 transcription factor activities to negatively regulate jasmonate-stimulated root hair development. This chain is Protein TIFY 5A, found in Arabidopsis thaliana (Mouse-ear cress).